A 297-amino-acid chain; its full sequence is Acetyl-coenzyme A carboxylase carboxyl transferase subunit beta (297 aa).

The interval 1–23 (MSWIERILGRTSSSSSSSKSKVP) is disordered. A CoA carboxyltransferase N-terminal domain is found at 26–295 (VWTKCTSCEQ…PFKTAELIVE (270 aa)). Zn(2+) is bound by residues Cys30, Cys33, Cys49, and Cys52. The C4-type zinc-finger motif lies at 30–52 (CTSCEQVLYSEELKRNMHVCPKC).

It belongs to the AccD/PCCB family. In terms of assembly, acetyl-CoA carboxylase is a heterohexamer composed of biotin carboxyl carrier protein (AccB), biotin carboxylase (AccC) and two subunits each of ACCase subunit alpha (AccA) and ACCase subunit beta (AccD). Zn(2+) is required as a cofactor.

It is found in the cytoplasm. The catalysed reaction is N(6)-carboxybiotinyl-L-lysyl-[protein] + acetyl-CoA = N(6)-biotinyl-L-lysyl-[protein] + malonyl-CoA. It functions in the pathway lipid metabolism; malonyl-CoA biosynthesis; malonyl-CoA from acetyl-CoA: step 1/1. Component of the acetyl coenzyme A carboxylase (ACC) complex. Biotin carboxylase (BC) catalyzes the carboxylation of biotin on its carrier protein (BCCP) and then the CO(2) group is transferred by the transcarboxylase to acetyl-CoA to form malonyl-CoA. This Actinobacillus pleuropneumoniae serotype 5b (strain L20) protein is Acetyl-coenzyme A carboxylase carboxyl transferase subunit beta.